A 423-amino-acid chain; its full sequence is Lysosomal acid phosphatase (423 aa).

Residues 1 to 30 (MAGRRFGWSRAALLQLILGVNLMVMPRTQA) form the signal peptide. Over 31–380 (RTLRFVTLLY…QLAGGPADTE (350 aa)) the chain is Lumenal. The Nucleophile role is filled by H42. N-linked (GlcNAc...) asparagine glycosylation is found at N92, N133, N167, N177, N191, and N267. Cystine bridges form between C159–C370, C212–C310, and C345–C349. D287 (proton donor) is an active-site residue. Residues N322 and N331 are each glycosylated (N-linked (GlcNAc...) asparagine). The helical transmembrane segment at 381-401 (VIVALAVCGSILFLLIVLLLT) threads the bilayer. The Cytoplasmic segment spans residues 402 to 423 (VLFRVQAQPPGYRHVPDGEDHA).

This sequence belongs to the histidine acid phosphatase family. Post-translationally, the membrane-bound form is converted to the soluble form by sequential proteolytic processing. First, the C-terminal cytoplasmic tail is removed. Cleavage by a lysosomal protease releases the soluble form in the lysosome lumen.

The protein localises to the lysosome membrane. It localises to the lysosome lumen. The catalysed reaction is a phosphate monoester + H2O = an alcohol + phosphate. This is Lysosomal acid phosphatase (ACP2) from Bos taurus (Bovine).